Consider the following 167-residue polypeptide: MKRKAIYPGTFDPFTNGHLDVLDRALNIFDEVEVVIGENSQKKTLFTVNERLEMIREIVIEFPGVTVAVLHDGLLANYARQVEARAIVRGVRQVKDFEYEFQMSLLNRHLYPEVTTVFLMPNVKYTYVASSIIREVAMLGGDVSKFVHPCVLAMLHKKLQENKKSNS.

Threonine 10 is a substrate binding site. Residues 10–11 (TF) and histidine 18 contribute to the ATP site. Substrate-binding residues include lysine 42, leucine 75, and arginine 89. Residues 90 to 92 (GVR), glutamate 100, and 125 to 131 (YTYVASS) contribute to the ATP site.

This sequence belongs to the bacterial CoaD family. Homohexamer. The cofactor is Mg(2+).

Its subcellular location is the cytoplasm. The enzyme catalyses (R)-4'-phosphopantetheine + ATP + H(+) = 3'-dephospho-CoA + diphosphate. The protein operates within cofactor biosynthesis; coenzyme A biosynthesis; CoA from (R)-pantothenate: step 4/5. Its function is as follows. Reversibly transfers an adenylyl group from ATP to 4'-phosphopantetheine, yielding dephospho-CoA (dPCoA) and pyrophosphate. This chain is Phosphopantetheine adenylyltransferase, found in Chlorobium phaeobacteroides (strain DSM 266 / SMG 266 / 2430).